Consider the following 175-residue polypeptide: Homeobox expressed in ES cells 1 (175 aa).

Residues 1–44 are disordered; that stretch reads MSPNLQEGARLVEGKPSSTSFSIESILGLDQKKDDAPSMKPHRP. Positions 108 to 167 form a DNA-binding region, homeobox; sequence GRRPRTAFTQNQVEVLENVFRVNCYPGIDIREDLARKLNLEEDRIQIWFQNRRAKLKRSH.

Belongs to the ANF homeobox family. In terms of assembly, interacts with TLE1.

Its subcellular location is the nucleus. In terms of biological role, required for the normal development of the forebrain, eyes and other anterior structures such as the olfactory placodes and pituitary gland. Possible transcriptional repressor. Binds to the palindromic PIII sequence, 5'-AGCTTGAGTCTAATTGAATTAACTGTAC-3'. In Oryctolagus cuniculus (Rabbit), this protein is Homeobox expressed in ES cells 1 (HESX1).